The following is a 102-amino-acid chain: COX assembly mitochondrial protein 2 homolog (102 aa).

Residues 11–55 form the CHCH domain; it reads TKECNMLIEFLQRCHSEKPIGKMIGKCSYWDEAVWQCTKKERIWR. 2 consecutive short sequence motifs (cx9C motif) follow at residues 14–24 and 37–47; these read CNMLIEFLQRC and CSYWDEAVWQC. Intrachain disulfides connect Cys14-Cys47 and Cys24-Cys37.

This sequence belongs to the CMC family.

It is found in the mitochondrion. Its function is as follows. May be involved in cytochrome c oxidase biogenesis. This chain is COX assembly mitochondrial protein 2 homolog, found in Caenorhabditis elegans.